Reading from the N-terminus, the 353-residue chain is Tetrahedral aminopeptidase (353 aa).

2 residues coordinate Zn(2+): His-68 and Asp-182. Catalysis depends on Glu-212, which acts as the Proton acceptor. Zn(2+) contacts are provided by Glu-213, Asp-235, and His-323.

The protein belongs to the peptidase M42 family. Homododecamer. The assembly of six dimers results in a tetrahedral-shaped structure; all 12 active sites are located on the inside of the tetrahedron. Substrate access is granted by four pores with a maximal diameter of 18 Angstroms, allowing only small peptides and unfolded proteins access to the active site. Beside the four entry ports, TET contains 12 small product release openings, which are large enough to allow passage of only single amino acid residues. Zn(2+) serves as cofactor. Co(2+) is required as a cofactor.

With respect to regulation, inhibited by EDTA and bestatin in vitro. Is insensitive to papain, antipain, chymostatin, leupeptin, pepstatin and aprotinin. Functions as an aminopeptidase, with a clear preference for leucine as the N-terminal amino acid. However, can also cleave moderately long polypeptide substrates of various compositions in a fairly unspecific manner. Has neither carboxypeptidase nor endoproteolytic activities, and it is devoid of N-terminal deblocking activity. Is involved in protein degradation, performing degradation of oligopeptides produced by the proteasome into single amino acids. The polypeptide is Tetrahedral aminopeptidase (frvX) (Pyrococcus horikoshii (strain ATCC 700860 / DSM 12428 / JCM 9974 / NBRC 100139 / OT-3)).